The sequence spans 379 residues: Protein RecA (379 aa).

G79 to T86 is an ATP binding site.

This sequence belongs to the RecA family.

The protein localises to the cytoplasm. Its function is as follows. Can catalyze the hydrolysis of ATP in the presence of single-stranded DNA, the ATP-dependent uptake of single-stranded DNA by duplex DNA, and the ATP-dependent hybridization of homologous single-stranded DNAs. It interacts with LexA causing its activation and leading to its autocatalytic cleavage. The polypeptide is Protein RecA (Streptococcus agalactiae).